The primary structure comprises 259 residues: BTB/POZ domain-containing protein KCTD4 (259 aa).

The interval 1 to 25 (MERKINRREKEKEYEGKHNSLEDTD) is disordered. One can recognise a BTB domain in the interval 33-134 (TLMTLNVGGY…EVKSRWEKEQ (102 aa)).

In Homo sapiens (Human), this protein is BTB/POZ domain-containing protein KCTD4 (KCTD4).